We begin with the raw amino-acid sequence, 143 residues long: Large ribosomal subunit protein uL13 (143 aa).

It belongs to the universal ribosomal protein uL13 family. In terms of assembly, part of the 50S ribosomal subunit.

Its function is as follows. This protein is one of the early assembly proteins of the 50S ribosomal subunit, although it is not seen to bind rRNA by itself. It is important during the early stages of 50S assembly. In Prochlorococcus marinus (strain MIT 9301), this protein is Large ribosomal subunit protein uL13.